Consider the following 1883-residue polypeptide: MDGQEHAEVPNSMVEDDQSVVAAEAIAELANSTGEPNPEEGEEQSVEDELIAKAQKLMEDITSVANNPNPNILHALSQLLESQESLFLEENGHFSNARGSHNSGKLCILIRENDEFFELISSTFLSENSYSTAVKAASARLLMNCSLTWMYPHVFDDAVTENFKNWVMEEAVKFPGEDSAKKEASDFEMLKTYSTGLLALSLASRGQIVEDVLTSGLSAKLMHYLRVRVLKEPSTSRIHTTETKHVSLKTKEEGRSRVRKIVDTVEGDHVLETDSGREMGQTDVQPDGEFEIDGRDVFNVSGVVDCKIKPGDDNSVRDDPSRHRLNRSKSRGRGRVHEGAPDTEVLLASPRLGRLLVRDRDLSKISDGRNAEDVTVCLGKMKSGIMEIEREDNDECFQGCIIGTKNITDLVKRAVGAAETEARAAHAPDDAAKAAGDAAAELVKTAALEEFKSSGSEEAAVSAATRAAITVIDAAEVSRNPTCVTSDQTTDVSEVSLPDIESLAQLQEKYCIQCLEILGEYVEVLGPVLHEKGVDVCIVLLERTSQLDDRSTVSPLLPDVMKLICALAAHRKFAAMFVERRGILKLLAVPRVSETFYGLSSCLYTIGSLQGIMERVCALPLVVIHQVVKLAIELLDCSQDQARKNSALFFAAAFVFRAILDAFDAQDSLQKLLAILKDAASVRTGANTDRSAPEVMTSSEKQMAFHTCFALRQYFRAHLLLLVDSIRPSRISRGGVPSSMKPNIRAAYKPLDISNEAVDAIFLQLQKDRRLGPTFVKAQWPAVNNFLASSGHVTMLELCQTPPVDRYLHDLLQYAFGVLHIVTSIPDGRKAIAHATLSNNRAGIAVILDAANISNSIVDPEIIQPALNVLINLVCPPPSLSNKPPLAQNHQPVPGQATTRPSTDVAVGTQSTGNAPQTPVAPASSGLVGDRRIFLGAGTGSAGLAAKLEQVYRQAREAVRGNDGIKILLKLLQPRIYVNPPATPDCLRALACRVLLGLARDDTIAQILTKLEVGKSLSELIRDSGGQSSGTDQGRWQAELAQVALELIGIVTNSGHATTLTASDAATPTLRRIERAAIAAATPITYDSKELLLLIHEHLQASGLGDTASALLKEAQLTPLPSSASPSSIAYSTTQEMSTPLAQEQWPSGRANSGFFTSKPKVCAHDEDPNSRSNAALSAKKKHLASSTLEMPTPVAQQQWPSGRANCGFCPSIPKINARDEDPSSRGNAAPSAKKKQLTFSPSFSSQSRKQSFSHDALPQSTQRINCCSNSDPALADTSETAAELVLKNDLDADAQFKTPISFPRKRKLSELRDSSVPGKRIDLGERRNSTFADGSGLQTPASALDANQSGSSRLGQMTPASQLRLPSDPQPSNPERLSLDSLVVQYLKHQHRQCLAPITTLPPVSLLHPHVCPEPKRLLEAPLNMTGRLGTRELQSFYSGVHGNRRDRQFVFSRFKSWRSFRDETALFTCIALLGGTNHIAVGSHAGEIKIFEASSGSMLESVSGHQAPVTLVQPYVSRDTQLLLSSSSSDVQLWDASSITGGPRHSFDGCKAAKFSNSGLQFAALSCEASRKDVLLYDVQTCSPCQKLTDTVTSSRSNPYSLVHFSPCDTLILWNGVLWDRRIPEKVRRFDQFTDYGGGGFHPSRNEVIINSEIWDMRTFKLLRSVPSLDQTAITFNSRGDVIYAMLRRNIEDVMSAVHTRRVKHPLFAAFRTLDAINYSDIATIPVDRCLLDFATEPTDSFLGLITMEDQEDMFSSARMYEIGRRRPTDDDSDPDDDDETEDEDEDDEEEDDLDRILGLAGDNSDSGDDDLSSEDNEDSVSDFDEEADILIDGDFMEELIEGENEDDGNGEDEDDDDDGEMQDFMSSGEEDDYRDNIRSS.

2 disordered regions span residues 1–47 and 309–340; these read MDGQ…QSVE and KPGD…HEGA. Positions 37-47 are enriched in acidic residues; sequence NPEEGEEQSVE. A compositionally biased stretch (basic and acidic residues) spans 309 to 322; it reads KPGDDNSVRDDPSR. Positions 323–334 are enriched in basic residues; that stretch reads HRLNRSKSRGRG. Residue serine 349 is modified to Phosphoserine. A disordered region spans residues 882-924; that stretch reads NKPPLAQNHQPVPGQATTRPSTDVAVGTQSTGNAPQTPVAPAS. Residues 888–917 are compositionally biased toward polar residues; sequence QNHQPVPGQATTRPSTDVAVGTQSTGNAPQ. The LisH domain maps to 1087 to 1119; the sequence is DSKELLLLIHEHLQASGLGDTASALLKEAQLTP. Disordered stretches follow at residues 1157–1202, 1214–1260, and 1310–1377; these read TSKP…QWPS, PKIN…ALPQ, and SELR…NPER. A compositionally biased stretch (low complexity) spans 1238–1251; sequence LTFSPSFSSQSRKQ. Basic and acidic residues predominate over residues 1310 to 1329; that stretch reads SELRDSSVPGKRIDLGERRN. Over residues 1330–1362 the composition is skewed to polar residues; it reads STFADGSGLQTPASALDANQSGSSRLGQMTPAS. 5 WD repeats span residues 1464-1503, 1506-1546, 1548-1586, 1587-1626, and 1633-1671; these read DETA…MLES, GHQA…GGPR, SFDG…TCSP, CQKL…RRIP, and DQFT…VPSL. 2 consecutive short sequence motifs (DWD box) follow at residues 1619–1626 and 1655–1662; these read VLWDRRIP and EIWDMRTF. The interval 1763-1883 is disordered; the sequence is YEIGRRRPTD…DDYRDNIRSS (121 aa). Composition is skewed to acidic residues over residues 1773–1796 and 1808–1864; these read DDSD…EDDL and DSGD…DGEM.

The protein belongs to the VPRBP/DCAF1 family. In terms of assembly, component of the CUL4-RBX1-DDB1-DCAF1 E3 ubiquitin-protein ligase complex. Interacts with DDB1A through its DWD motifs. As to expression, ubiquitous but predominantly expressed in the inflorescence and roots.

It is found in the nucleus. It participates in protein modification; protein ubiquitination. Component of the CUL4-RBX1-DDB1-DCAF1 E3 ubiquitin-protein ligase complex, DCAF1 may function as the substrate recognition module within this complex. Appears to be required for plant embryogenesis and to affect several other developmental processes including leaf, shoot, and flower development. In Arabidopsis thaliana (Mouse-ear cress), this protein is DDB1- and CUL4-associated factor homolog 1 (DCAF1).